The following is an 881-amino-acid chain: Rho GTPase-activating protein 17 (881 aa).

Residues 14–246 (QTVGRAEKTE…MRAHQDKWAE (233 aa)) enclose the BAR domain. In terms of domain architecture, Rho-GAP spans 252 to 442 (TPLEEHLKRS…PIIQHADWFF (191 aa)). Residues 459-475 (TPSSNHSFHTGNDSDSG) are compositionally biased toward polar residues. Positions 459-482 (TPSSNHSFHTGNDSDSGTLERKRP) are disordered. 2 positions are modified to phosphoserine: serine 484 and serine 575. The disordered stretch occupies residues 511–881 (GGTLNRKHIS…IDNDTESTAL (371 aa)). Residues 592-617 (RNNSQIASGQNQPQAAAGSHQLSMGQ) show a composition bias toward polar residues. Residues 637–650 (APAPPKPGNPPPGH) show a composition bias toward pro residues. Residues 653–664 (GQSSSGTSQHPP) are compositionally biased toward low complexity. The segment covering 665 to 678 (SLSPKPPTRSPSPP) has biased composition (pro residues). Residues threonine 679 and threonine 682 each carry the phosphothreonine modification. The span at 679–698 (TQHTGQPPGQPSAPSQLSAP) shows a compositional bias: low complexity. Phosphoserine is present on residues serine 702 and serine 704. 3 stretches are compositionally biased toward pro residues: residues 712–721 (NHPPPQPPTQ), 752–764 (HTPP…PSTP), and 806–816 (RPSVPPPPQPP). Residues threonine 753, threonine 757, and threonine 759 each carry the phosphothreonine modification. The SH3-binding motif lies at 753–766 (TPPQTPTPPSTPPL). A Phosphoserine modification is found at serine 762. Position 763 is a phosphothreonine (threonine 763). The segment covering 822-844 (GDSSLTNTAPTASKIVTDSNSRV) has biased composition (polar residues). The segment covering 845–865 (SEPHRSIFPEMHSDSASKDVP) has biased composition (basic and acidic residues). The segment covering 872 to 881 (IDNDTESTAL) has biased composition (acidic residues).

Component of a complex whose core is composed of ARHGAP17, AMOT, PALS1, PATJ and PARD3/PAR3. Interacts with NHERF1, FNBP1, TRIP10, CAPZA (CAPZA1, CAPZA2 or CAPZA3), CAPZB, CD2AP and SH3KBP1/CIN85. Ubiquitously expressed. Expressed at higher level in heart and placenta.

It localises to the membrane. It is found in the cytoplasm. Its subcellular location is the cell junction. The protein localises to the tight junction. Its function is as follows. Rho GTPase-activating protein involved in the maintenance of tight junction by regulating the activity of CDC42, thereby playing a central role in apical polarity of epithelial cells. Specifically acts as a GTPase activator for the CDC42 GTPase by converting it to an inactive GDP-bound state. The complex formed with AMOT acts by regulating the uptake of polarity proteins at tight junctions, possibly by deciding whether tight junction transmembrane proteins are recycled back to the plasma membrane or sent elsewhere. Participates in the Ca(2+)-dependent regulation of exocytosis, possibly by catalyzing GTPase activity of Rho family proteins and by inducing the reorganization of the cortical actin filaments. Acts as a GTPase activator in vitro for RAC1. The polypeptide is Rho GTPase-activating protein 17 (ARHGAP17) (Homo sapiens (Human)).